The following is a 217-amino-acid chain: DNA transformation protein TfoX (217 aa).

This sequence belongs to the Sxy/TfoX family.

Required for DNA transformation. Positively regulates genes required for DNA transformation (late competence-specific genes) in association with CRP. Required for expression of the late competence-specific gene, com101A. Required for expression of the dprABC operon. This is DNA transformation protein TfoX from Haemophilus influenzae (strain ATCC 51907 / DSM 11121 / KW20 / Rd).